Consider the following 169-residue polypeptide: S-ribosylhomocysteine lyase (169 aa).

Fe cation-binding residues include His-54, His-58, and Cys-129.

The protein belongs to the LuxS family. As to quaternary structure, homodimer. It depends on Fe cation as a cofactor.

The catalysed reaction is S-(5-deoxy-D-ribos-5-yl)-L-homocysteine = (S)-4,5-dihydroxypentane-2,3-dione + L-homocysteine. In terms of biological role, involved in the synthesis of autoinducer 2 (AI-2) which is secreted by bacteria and is used to communicate both the cell density and the metabolic potential of the environment. The regulation of gene expression in response to changes in cell density is called quorum sensing. Catalyzes the transformation of S-ribosylhomocysteine (RHC) to homocysteine (HC) and 4,5-dihydroxy-2,3-pentadione (DPD). The protein is S-ribosylhomocysteine lyase of Actinobacillus pleuropneumoniae serotype 5b (strain L20).